The chain runs to 148 residues: Outer envelope pore protein 16-1, chloroplastic (148 aa).

Positions Pro2–Glu73 are contains 4 beta strands. 3 helical membrane-spanning segments follow: residues Val75–Ile91, Asn102–Gly118, and Ile125–Val142.

This sequence belongs to the Tim17/Tim22/Tim23 family. Plastid outer envelope porin OEP16 (TC 1.B.30) subfamily. As to quaternary structure, homodimer and oligomers in membrane. Forms large complexes including TOC33, pPORA and OEP161 during pPORA import into plastids at the plastid envelope membrane. In terms of tissue distribution, expressed predominantly in leaves and cotyledons.

Its subcellular location is the plastid. The protein resides in the chloroplast outer membrane. The protein localises to the etioplast membrane. Its activity is regulated as follows. Stimulated by GTP. Its function is as follows. Voltage-dependent high-conductance channel with a slight cation-selectivity; selective for amino acids but excludes triosephosphates or uncharged sugars. Non-essential amino acid-selective channel protein and translocation pore for NADPH:protochlorophyllide oxidoreductase A (PORA) and possibly PORB. Involved in PORA precursor (pPORA) import and thus confers photoprotection onto etiolated seedlings during greening. The chain is Outer envelope pore protein 16-1, chloroplastic (OEP161) from Arabidopsis thaliana (Mouse-ear cress).